A 430-amino-acid chain; its full sequence is Long-chain specific acyl-CoA dehydrogenase, mitochondrial (430 aa).

The transit peptide at 1–30 directs the protein to the mitochondrion; the sequence is MAARLLLRSLRVLKARSAPRPPPSARCSHS. The disordered stretch occupies residues 17 to 39; it reads SAPRPPPSARCSHSGAEARLETP. Lys-42 carries the post-translational modification N6-acetyllysine. Ser-54 and Ser-55 each carry phosphoserine. Residues Lys-66 and Lys-81 each carry the N6-acetyllysine; alternate modification. Lys-66 and Lys-81 each carry N6-succinyllysine; alternate. An N6-acetyllysine mark is found at Lys-92 and Lys-95. Residue Lys-165 is modified to N6-succinyllysine. FAD is bound at residue 170 to 179; that stretch reads IAMTEPGAGS. Ser-179 contacts substrate. The residue at position 191 (Ser-191) is a Phosphoserine. 203-205 lines the FAD pocket; the sequence is FIT. Position 227–228 (227–228) interacts with substrate; sequence AH. Lys-240 bears the N6-succinyllysine mark. Lys-254 and Lys-279 each carry N6-acetyllysine; alternate. N6-succinyllysine; alternate occurs at positions 254 and 279. Substrate contacts are provided by residues Tyr-282 and 289–292; that span reads PQER. The active-site Proton acceptor is the Glu-291. Arg-317 contacts FAD. Lys-318 bears the N6-acetyllysine mark. Position 322 is an N6-acetyllysine; alternate (Lys-322). At Lys-322 the chain carries N6-succinyllysine; alternate. Gln-328 is an FAD binding site. N6-acetyllysine is present on Lys-358. Ser-362 carries the phosphoserine modification. 385 to 389 is a binding site for FAD; that stretch reads QLHGG. 412–413 is a substrate binding site; that stretch reads GG. Residue 414 to 416 participates in FAD binding; sequence TNE.

It belongs to the acyl-CoA dehydrogenase family. Homotetramer. It depends on FAD as a cofactor. In terms of processing, acetylation at Lys-318 and Lys-322 in proximity of the cofactor-binding sites strongly reduces catalytic activity. These sites are deacetylated by SIRT3. In terms of tissue distribution, expressed in heart, skeletal muscle, kidney, and brain. Expressed in liver (at protein level).

It localises to the mitochondrion matrix. It carries out the reaction a long-chain 2,3-saturated fatty acyl-CoA + oxidized [electron-transfer flavoprotein] + H(+) = a long-chain (2E)-enoyl-CoA + reduced [electron-transfer flavoprotein]. The catalysed reaction is oxidized [electron-transfer flavoprotein] + hexadecanoyl-CoA + H(+) = (2E)-hexadecenoyl-CoA + reduced [electron-transfer flavoprotein]. The enzyme catalyses hexanoyl-CoA + oxidized [electron-transfer flavoprotein] + H(+) = (2E)-hexenoyl-CoA + reduced [electron-transfer flavoprotein]. It catalyses the reaction octanoyl-CoA + oxidized [electron-transfer flavoprotein] + H(+) = (2E)-octenoyl-CoA + reduced [electron-transfer flavoprotein]. It carries out the reaction decanoyl-CoA + oxidized [electron-transfer flavoprotein] + H(+) = (2E)-decenoyl-CoA + reduced [electron-transfer flavoprotein]. The catalysed reaction is dodecanoyl-CoA + oxidized [electron-transfer flavoprotein] + H(+) = (2E)-dodecenoyl-CoA + reduced [electron-transfer flavoprotein]. The enzyme catalyses tetradecanoyl-CoA + oxidized [electron-transfer flavoprotein] + H(+) = (2E)-tetradecenoyl-CoA + reduced [electron-transfer flavoprotein]. It catalyses the reaction octadecanoyl-CoA + oxidized [electron-transfer flavoprotein] + H(+) = (2E)-octadecenoyl-CoA + reduced [electron-transfer flavoprotein]. It carries out the reaction eicosanoyl-CoA + oxidized [electron-transfer flavoprotein] + H(+) = (2E)-eicosenoyl-CoA + reduced [electron-transfer flavoprotein]. The catalysed reaction is docosanoyl-CoA + oxidized [electron-transfer flavoprotein] + H(+) = (2E)-docosenoyl-CoA + reduced [electron-transfer flavoprotein]. The enzyme catalyses tetracosanoyl-CoA + oxidized [electron-transfer flavoprotein] + H(+) = (2E)-tetracosenoyl-CoA + reduced [electron-transfer flavoprotein]. It catalyses the reaction (5E)-tetradecenoyl-CoA + oxidized [electron-transfer flavoprotein] + H(+) = (2E,5E)-tetradecadienoyl-CoA + reduced [electron-transfer flavoprotein]. It carries out the reaction (5Z)-tetradecenoyl-CoA + oxidized [electron-transfer flavoprotein] + H(+) = (2E,5Z)-tetradecadienoyl-CoA + reduced [electron-transfer flavoprotein]. The catalysed reaction is oxidized [electron-transfer flavoprotein] + (9Z)-octadecenoyl-CoA + H(+) = (2E,9Z)-octadecadienoyl-CoA + reduced [electron-transfer flavoprotein]. The protein operates within lipid metabolism; mitochondrial fatty acid beta-oxidation. In terms of biological role, long-chain specific acyl-CoA dehydrogenase is one of the acyl-CoA dehydrogenases that catalyze the first step of mitochondrial fatty acid beta-oxidation, an aerobic process breaking down fatty acids into acetyl-CoA and allowing the production of energy from fats. The first step of fatty acid beta-oxidation consists in the removal of one hydrogen from C-2 and C-3 of the straight-chain fatty acyl-CoA thioester, resulting in the formation of trans-2-enoyl-CoA. Among the different mitochondrial acyl-CoA dehydrogenases, long-chain specific acyl-CoA dehydrogenase can act on saturated and unsaturated acyl-CoAs with 6 to 24 carbons with a preference for 8 to 18 carbons long primary chains. This is Long-chain specific acyl-CoA dehydrogenase, mitochondrial from Mus musculus (Mouse).